The primary structure comprises 337 residues: Phosphate acyltransferase (337 aa).

It belongs to the PlsX family. Homodimer. Probably interacts with PlsY.

It localises to the cytoplasm. The enzyme catalyses a fatty acyl-[ACP] + phosphate = an acyl phosphate + holo-[ACP]. The protein operates within lipid metabolism; phospholipid metabolism. Functionally, catalyzes the reversible formation of acyl-phosphate (acyl-PO(4)) from acyl-[acyl-carrier-protein] (acyl-ACP). This enzyme utilizes acyl-ACP as fatty acyl donor, but not acyl-CoA. This Ehrlichia canis (strain Jake) protein is Phosphate acyltransferase.